The sequence spans 313 residues: Aspartate carbamoyltransferase catalytic subunit (313 aa).

The carbamoyl phosphate site is built by Arg-58 and Thr-59. L-aspartate is bound at residue Lys-86. Arg-108, His-136, and Gln-139 together coordinate carbamoyl phosphate. Positions 169 and 224 each coordinate L-aspartate. Gly-265 and Pro-266 together coordinate carbamoyl phosphate.

It belongs to the aspartate/ornithine carbamoyltransferase superfamily. ATCase family. As to quaternary structure, heterododecamer (2C3:3R2) of six catalytic PyrB chains organized as two trimers (C3), and six regulatory PyrI chains organized as three dimers (R2).

It catalyses the reaction carbamoyl phosphate + L-aspartate = N-carbamoyl-L-aspartate + phosphate + H(+). The protein operates within pyrimidine metabolism; UMP biosynthesis via de novo pathway; (S)-dihydroorotate from bicarbonate: step 2/3. Functionally, catalyzes the condensation of carbamoyl phosphate and aspartate to form carbamoyl aspartate and inorganic phosphate, the committed step in the de novo pyrimidine nucleotide biosynthesis pathway. This Natranaerobius thermophilus (strain ATCC BAA-1301 / DSM 18059 / JW/NM-WN-LF) protein is Aspartate carbamoyltransferase catalytic subunit.